A 372-amino-acid polypeptide reads, in one-letter code: Glutamate 5-kinase (372 aa).

Lys14 lines the ATP pocket. Residues Ser54, Asp141, and Asn153 each coordinate substrate. Residues 173-174 (TD) and 215-221 (TGGMSTK) each bind ATP. The PUA domain occupies 280–358 (QGSLVLDAGA…DEIESVLGYD (79 aa)).

It belongs to the glutamate 5-kinase family.

The protein localises to the cytoplasm. It catalyses the reaction L-glutamate + ATP = L-glutamyl 5-phosphate + ADP. Its pathway is amino-acid biosynthesis; L-proline biosynthesis; L-glutamate 5-semialdehyde from L-glutamate: step 1/2. In terms of biological role, catalyzes the transfer of a phosphate group to glutamate to form L-glutamate 5-phosphate. The sequence is that of Glutamate 5-kinase from Shewanella oneidensis (strain ATCC 700550 / JCM 31522 / CIP 106686 / LMG 19005 / NCIMB 14063 / MR-1).